A 161-amino-acid polypeptide reads, in one-letter code: Small ribosomal subunit protein uS19 (161 aa).

Residues 1–19 (MARQKKYSGKGGARKKNKQ) are compositionally biased toward basic residues. The disordered stretch occupies residues 1-26 (MARQKKYSGKGGARKKNKQKQNVAPR).

This sequence belongs to the universal ribosomal protein uS19 family.

Its function is as follows. Protein S19 forms a complex with S13 that binds strongly to the 16S ribosomal RNA. The chain is Small ribosomal subunit protein uS19 from Methanococcus maripaludis (strain DSM 14266 / JCM 13030 / NBRC 101832 / S2 / LL).